The primary structure comprises 650 residues: Transcription factor LHW (650 aa).

Disordered regions lie at residues 381–417 (LTKV…SSVY) and 431–470 (LKRE…DRQM). Residues 384-397 (VSNSSVTTPSHSSP) are compositionally biased toward low complexity. A Nuclear localization signal motif is present at residues 451-458 (NRKRLKPG). The region spanning 455 to 504 (LKPGENPRPRPKDRQMIQDRVKELREIIPNGAKCSIDALLERTIKHMLFL) is the bHLH domain. Positions 456–470 (KPGENPRPRPKDRQM) are enriched in basic and acidic residues.

The protein belongs to the bHLH protein family. LHW subfamily. As to quaternary structure, homodimer. Can also interact with bHLH proteins. Expressed in both root and shoot meristems. Present in root tips.

Its subcellular location is the nucleus. In terms of biological role, transcription activator that regulates root development; promotes the production of stele cells in roots. Coordinately controls the number of all vascular cell types by regulating the size of the pool of cells from which they arise. In Arabidopsis thaliana (Mouse-ear cress), this protein is Transcription factor LHW (LHW).